An 81-amino-acid chain; its full sequence is MNDVFSTAQHKLDALGLRCPEPVMMVRKTVRQMAQGETLLIIADDPATTRDIPSFCEFMDHTLIASETSQTPYQYLIKKGL.

C19 acts as the Cysteine persulfide intermediate in catalysis.

The protein belongs to the sulfur carrier protein TusA family.

It is found in the cytoplasm. Its function is as follows. Sulfur carrier protein which probably makes part of a sulfur-relay system. This chain is Sulfur carrier protein TusA, found in Shewanella sp. (strain MR-4).